A 238-amino-acid polypeptide reads, in one-letter code: Lipoprotein-releasing system ATP-binding protein LolD (238 aa).

The ABC transporter domain occupies 6 to 238 (LVCQGIRKVY…RSSLAQEMEA (233 aa)). An ATP-binding site is contributed by 42–49 (GSSGSGKS).

Belongs to the ABC transporter superfamily. Lipoprotein translocase (TC 3.A.1.125) family. In terms of assembly, the complex is composed of two ATP-binding proteins (LolD) and two transmembrane proteins (LolC and LolE).

The protein localises to the cell inner membrane. In terms of biological role, part of the ABC transporter complex LolCDE involved in the translocation of mature outer membrane-directed lipoproteins, from the inner membrane to the periplasmic chaperone, LolA. Responsible for the formation of the LolA-lipoprotein complex in an ATP-dependent manner. The sequence is that of Lipoprotein-releasing system ATP-binding protein LolD from Aliivibrio fischeri (strain ATCC 700601 / ES114) (Vibrio fischeri).